Consider the following 88-residue polypeptide: Small ribosomal subunit protein bS20 (88 aa).

Residues 1–23 are disordered; the sequence is MANTSSAKKATRKIARRAAINKN.

It belongs to the bacterial ribosomal protein bS20 family.

Binds directly to 16S ribosomal RNA. The polypeptide is Small ribosomal subunit protein bS20 (Mesorhizobium japonicum (strain LMG 29417 / CECT 9101 / MAFF 303099) (Mesorhizobium loti (strain MAFF 303099))).